A 149-amino-acid chain; its full sequence is Large ribosomal subunit protein bL9 (149 aa).

It belongs to the bacterial ribosomal protein bL9 family.

Its function is as follows. Binds to the 23S rRNA. This is Large ribosomal subunit protein bL9 from Klebsiella pneumoniae subsp. pneumoniae (strain ATCC 700721 / MGH 78578).